Here is a 231-residue protein sequence, read N- to C-terminus: Putative cobalt transport protein CbiM 1 (231 aa).

6 helical membrane passes run 8-28 (LPLQ…AYGI), 41-61 (TLPL…LKMP), 74-94 (GLGA…IVLV), 97-117 (ALFL…SMGI), 138-158 (IVNV…ITSI), and 175-195 (FITF…IEGI).

It belongs to the CbiM family. As to quaternary structure, forms an energy-coupling factor (ECF) transporter complex composed of an ATP-binding protein (A component, CbiO), a transmembrane protein (T component, CbiQ) and 2 possible substrate-capture proteins (S components, CbiM and CbiN) of unknown stoichimetry.

The protein resides in the cell membrane. Its pathway is cofactor biosynthesis; adenosylcobalamin biosynthesis. Part of the energy-coupling factor (ECF) transporter complex CbiMNOQ involved in cobalt import. The protein is Putative cobalt transport protein CbiM 1 of Methanosphaerula palustris (strain ATCC BAA-1556 / DSM 19958 / E1-9c).